The primary structure comprises 236 residues: 2-C-methyl-D-erythritol 4-phosphate cytidylyltransferase (236 aa).

Belongs to the IspD/TarI cytidylyltransferase family. IspD subfamily.

The enzyme catalyses 2-C-methyl-D-erythritol 4-phosphate + CTP + H(+) = 4-CDP-2-C-methyl-D-erythritol + diphosphate. The protein operates within isoprenoid biosynthesis; isopentenyl diphosphate biosynthesis via DXP pathway; isopentenyl diphosphate from 1-deoxy-D-xylulose 5-phosphate: step 2/6. In terms of biological role, catalyzes the formation of 4-diphosphocytidyl-2-C-methyl-D-erythritol from CTP and 2-C-methyl-D-erythritol 4-phosphate (MEP). This is 2-C-methyl-D-erythritol 4-phosphate cytidylyltransferase from Pseudomonas syringae pv. tomato (strain ATCC BAA-871 / DC3000).